A 1543-amino-acid polypeptide reads, in one-letter code: ATP-binding cassette sub-family A member 10 (1543 aa).

Transmembrane regions (helical) follow at residues 83-103, 135-155, 185-205, 210-230, 240-260, 264-284, and 310-330; these read YWLK…IEVT, WFHF…SLNV, ICFI…IPIV, FMVI…LAFL, LAGL…FTVL, LPLS…TAGM, and IATF…TLYF. One can recognise an ABC transporter 1 domain in the interval 391 to 626; it reads IRIRNVIKEY…WGIGYHLSLH (236 aa). 427–434 contributes to the ATP binding site; it reads GHNGAGKS. The next 8 helical transmembrane spans lie at 774–794, 890–910, 926–946, 985–1005, 1014–1034, 1046–1066, 1073–1093, and 1113–1133; these read LLCL…EKIM, LNCF…IFNF, IVLD…TNCV, IPLY…IFLG, FVLV…TYVL, GFWS…MVST, LILC…MLLI, and KTIL…LFVI. Basic and acidic residues predominate over residues 1153 to 1164; sequence ISPRSRETHPNP. The segment at 1153-1177 is disordered; the sequence is ISPRSRETHPNPEEPEEEDEDVQAE. Over residues 1165-1174 the composition is skewed to acidic residues; that stretch reads EEPEEEDEDV. The ABC transporter 2 domain occupies 1206 to 1440; sequence YETKKSCFST…FGRDYLLEIK (235 aa). An ATP-binding site is contributed by 1239 to 1246; it reads GHNGAGKS.

This sequence belongs to the ABC transporter superfamily. ABCA family. Widely expressed. Highly expressed in skeletal muscle, heart, brain and gastrointestinal tract.

Its subcellular location is the membrane. Functionally, probable transporter which may play a role in macrophage lipid transport and homeostasis. In Homo sapiens (Human), this protein is ATP-binding cassette sub-family A member 10 (ABCA10).